We begin with the raw amino-acid sequence, 404 residues long: Acetylornithine aminotransferase (404 aa).

Residues 113 to 114 and Phe139 contribute to the pyridoxal 5'-phosphate site; that span reads GT. Arg142 provides a ligand contact to N(2)-acetyl-L-ornithine. 224-227 provides a ligand contact to pyridoxal 5'-phosphate; the sequence is DEVQ. Lys253 is modified (N6-(pyridoxal phosphate)lysine). Residue Ser281 participates in N(2)-acetyl-L-ornithine binding. Residue Thr282 coordinates pyridoxal 5'-phosphate.

The protein belongs to the class-III pyridoxal-phosphate-dependent aminotransferase family. ArgD subfamily. Homodimer. Pyridoxal 5'-phosphate is required as a cofactor.

Its subcellular location is the cytoplasm. The catalysed reaction is N(2)-acetyl-L-ornithine + 2-oxoglutarate = N-acetyl-L-glutamate 5-semialdehyde + L-glutamate. Its pathway is amino-acid biosynthesis; L-arginine biosynthesis; N(2)-acetyl-L-ornithine from L-glutamate: step 4/4. In Mycobacterium leprae (strain TN), this protein is Acetylornithine aminotransferase.